Here is a 556-residue protein sequence, read N- to C-terminus: Glutamine--tRNA ligase (556 aa).

The short motif at proline 34–histidine 44 is the 'HIGH' region element. Residues glutamate 35–asparagine 37 and histidine 41–serine 47 contribute to the ATP site. L-glutamine-binding residues include aspartate 67 and tyrosine 212. ATP is bound by residues threonine 231, arginine 261–leucine 262, and methionine 269–lysine 271. Positions valine 268–arginine 272 match the 'KMSKS' region motif.

It belongs to the class-I aminoacyl-tRNA synthetase family. Monomer.

The protein localises to the cytoplasm. The enzyme catalyses tRNA(Gln) + L-glutamine + ATP = L-glutaminyl-tRNA(Gln) + AMP + diphosphate. This is Glutamine--tRNA ligase from Vibrio vulnificus (strain YJ016).